A 99-amino-acid polypeptide reads, in one-letter code: DNA-binding protein Fis (99 aa).

The interval 1-25 is disordered; sequence MFEQKISSEALTTTTSIPATGQITQ. The segment at residues 75-94 is a DNA-binding region (H-T-H motif); that stretch reads QTRAATMLGINRGTLRKKLK.

This sequence belongs to the transcriptional regulatory Fis family. In terms of assembly, homodimer.

Its function is as follows. Activates ribosomal RNA transcription. Plays a direct role in upstream activation of rRNA promoters. This chain is DNA-binding protein Fis, found in Psychromonas ingrahamii (strain DSM 17664 / CCUG 51855 / 37).